The primary structure comprises 73 residues: Long neurotoxin 1 (73 aa).

Cystine bridges form between Cys-3–Cys-21, Cys-14–Cys-42, Cys-27–Cys-31, Cys-46–Cys-57, and Cys-58–Cys-63.

This sequence belongs to the three-finger toxin family. Long-chain subfamily. Type II alpha-neurotoxin sub-subfamily. In terms of tissue distribution, expressed by the venom gland.

Its subcellular location is the secreted. In terms of biological role, binds with high affinity to muscular (alpha-1/CHRNA1) and neuronal (alpha-7/CHRNA7) nicotinic acetylcholine receptor (nAChR) and inhibits acetylcholine from binding to the receptor, thereby impairing neuromuscular and neuronal transmission. The protein is Long neurotoxin 1 of Ophiophagus hannah (King cobra).